The sequence spans 219 residues: Inner membrane protein YccA (219 aa).

Residues 1-22 are Periplasmic-facing; sequence MDRIVSSSHDRTSLLSTHKVLR. 2 consecutive transmembrane segments (helical) span residues 23–43 and 44–64; these read NTYFLLSLTLAFSAITATAST and VLMLPSPGLILTLVGMYGLMF. Topologically, residues 65–73 are periplasmic; the sequence is LTYKTANKP. A helical membrane pass occupies residues 74–94; that stretch reads TGIISAFAFTGFLGYILGPIL. At 95 to 104 the chain is on the cytoplasmic side; the sequence is NTYLSAGMGD. A helical membrane pass occupies residues 105–125; that stretch reads VIAMALGGTALVFFCCSAYVL. Residues 126 to 133 are Periplasmic-facing; that stretch reads TTRKDMSF. Residues 134-154 form a helical membrane-spanning segment; the sequence is LGGMLMAGIVVVLIGMVANIF. At 155 to 157 the chain is on the cytoplasmic side; that stretch reads LQL. The chain crosses the membrane as a helical span at residues 158-178; sequence PALHLAISAVFILISSGAILF. Residues 179 to 195 lie on the Periplasmic side of the membrane; the sequence is ETSNIIHGGETNYIRAT. Residues 196–216 traverse the membrane as a helical segment; it reads VSLYVSLYNIFVSLLSILGFA. Residues 217 to 219 lie on the Cytoplasmic side of the membrane; it reads SRD.

It belongs to the BI1 family.

It is found in the cell inner membrane. This Escherichia coli O6:H1 (strain CFT073 / ATCC 700928 / UPEC) protein is Inner membrane protein YccA (yccA).